Consider the following 804-residue polypeptide: MYNHKVVEKKWQKYWLENKTFKTGTDPEKPKYYVLDMFPYPSGKGLHVGHPEGYTATDIMARMKRAQGYNVLHPMGWDAFGLPAEQYALQTGNDPATFTDENIAHFKKQLQALGFSYDWDREIKTTDPNYYKWTQWIFEQMYKMGLAYEAEVPVNWSPDLGTVVANEEVIDGKTERGGYPVYRRKMRQWMLKITAYADRLLDDLDDLDWPEPIKEMQRNWIGRSVGAQVTFKIKDSDKSFAVFTTRPDTLFGCSYTVLAPENELVKEITSPEQKEAVDAYIKSIESKSDLERTDLNKDKTGVFTGAYAINPVNGEEVPVWISDYVLATYGTGAVIAVPAHDERDYAFATKFDLPIKEVVEGGDISKEAFAGDGVHVNSDFLNGLHNEEAKAKMVDWLTEKGVGEKKVNYKMRDWNFSRQRYWGEPIPVIHWEDGETTLVPEDELPLRLPKESNIKPSGTPESPLANLTDWVNVVDENGRKGKRETNTMPQWAGSSWYFLRYIDPHNDKALADPELLKKWMPVDLYIGGAEHATLHLLYARFWHKVLYDLGVVPTKEPFQKLYNQGLILKNHEKMSKSRGNVVNPDDVVDEYGADSLRTYEMFMGPLNASIDWDDNGPSGVKKFLDRVWRTFVNDLDLDPIPSEKITDKNDGKLDKIYNETVKTVTEHFEELRFNTAISQMMVFMNACQKVDKIPREYAEGFVKLMAPVAPHMMEEIWHVFGHDESVQFAAWPTYDASKLVESTVEMAVTVNGKKRGNFQIAKDASREEAQAAATALPHVKEFLEGKEIKKVIVVPNKIVNIVAK.

Positions 39-50 (PYPSGKGLHVGH) match the 'HIGH' region motif. The 'KMSKS' region signature appears at 573–577 (KMSKS). Lys-576 contacts ATP.

The protein belongs to the class-I aminoacyl-tRNA synthetase family.

Its subcellular location is the cytoplasm. It catalyses the reaction tRNA(Leu) + L-leucine + ATP = L-leucyl-tRNA(Leu) + AMP + diphosphate. In Lactobacillus delbrueckii subsp. bulgaricus (strain ATCC BAA-365 / Lb-18), this protein is Leucine--tRNA ligase.